The primary structure comprises 31 residues: Maltose/maltodextrin import ATP-binding protein MalK (31 aa).

Belongs to the ABC transporter superfamily. Maltooligosaccharide importer (TC 3.A.1.1.1) family. In terms of assembly, the complex is composed of two ATP-binding proteins (MalK), two transmembrane proteins (MalG and MalK) and a solute-binding protein (MalE).

Its subcellular location is the cell inner membrane. The catalysed reaction is D-maltose(out) + ATP + H2O = D-maltose(in) + ADP + phosphate + H(+). Its function is as follows. Part of the ABC transporter complex MalEFGK involved in maltose/maltodextrin import. Responsible for energy coupling to the transport system. In Photorhabdus luminescens (Xenorhabdus luminescens), this protein is Maltose/maltodextrin import ATP-binding protein MalK.